A 100-amino-acid polypeptide reads, in one-letter code: Urease subunit gamma (100 aa).

This sequence belongs to the urease gamma subunit family. In terms of assembly, heterotrimer of UreA (gamma), UreB (beta) and UreC (alpha) subunits. Three heterotrimers associate to form the active enzyme.

The protein resides in the cytoplasm. The enzyme catalyses urea + 2 H2O + H(+) = hydrogencarbonate + 2 NH4(+). It participates in nitrogen metabolism; urea degradation; CO(2) and NH(3) from urea (urease route): step 1/1. The sequence is that of Urease subunit gamma from Chromohalobacter salexigens (strain ATCC BAA-138 / DSM 3043 / CIP 106854 / NCIMB 13768 / 1H11).